A 538-amino-acid chain; its full sequence is uncharacterized protein (538 aa).

4 disordered regions span residues 20 to 71, 151 to 211, 288 to 331, and 458 to 482; these read RLSA…GGAQ, LWAE…EHPK, MLQP…QQHK, and EFEK…LKNY. The segment covering 154 to 171 has biased composition (basic and acidic residues); sequence ESEKSESKGTRRDFRSYD.

This is an uncharacterized protein from Homo sapiens (Human).